A 252-amino-acid polypeptide reads, in one-letter code: 5'-nucleotidase SurE (252 aa).

A divalent metal cation contacts are provided by Asp8, Asp9, Ser39, and Asn91.

This sequence belongs to the SurE nucleotidase family. A divalent metal cation serves as cofactor.

It is found in the cytoplasm. It catalyses the reaction a ribonucleoside 5'-phosphate + H2O = a ribonucleoside + phosphate. Nucleotidase that shows phosphatase activity on nucleoside 5'-monophosphates. This Bordetella petrii (strain ATCC BAA-461 / DSM 12804 / CCUG 43448) protein is 5'-nucleotidase SurE.